The following is a 123-amino-acid chain: MKLLLLALPMLVLLPQVIPAYSGEKKCWNRSGHCRKQCKDGEAVKDTCKNLRACCIPSNEDHRRVPATSPTPLSDSTPGIIDDILTVRFTTDYFEVSSKKDMVEESEAGRGTETSLPNVHHSS.

Positions 1 to 19 (MKLLLLALPMLVLLPQVIP) are cleaved as a signal peptide. Disulfide bonds link C27–C54, C34–C48, and C38–C55. Residues 65-123 (VPATSPTPLSDSTPGIIDDILTVRFTTDYFEVSSKKDMVEESEAGRGTETSLPNVHHSS) constitute a propeptide that is removed on maturation. Residues 100–110 (KDMVEESEAGR) are compositionally biased toward basic and acidic residues. The interval 100 to 123 (KDMVEESEAGRGTETSLPNVHHSS) is disordered. Residues 112 to 123 (TETSLPNVHHSS) show a composition bias toward polar residues.

Belongs to the beta-defensin family. In terms of processing, the three-dimensional structure formed by the three intramolecular disulfide bridges is indispensable for antimicrobial activity. As to expression, high-level and epididymis-specific expression. Most abundant in the epithelium of the caput and present in the epididymis lumen and bound to sperm. Also expressed in pancreas.

Its subcellular location is the secreted. Host defense peptide that exhibits antimicrobial activity against both Gram-negative bacteria, such as E.coli and S.typhimurium, and Gram-positive bacteria, such as S.aureus and B.subtilis. Inhibits cell adhesion of E.coli on intestinal epithelial enterocytes. Causes rapid permeabilization of both the outer and inner membrane of E.coli, leading to morphological alterations on the bacterial surface. Binds to bacterial lipopolysaccharides (LPS) with high affinity, and may thereby be involved in immunoregulation through LPS neutralization. May contribute to epididymal innate immunity and protect the sperm against attack by microorganisms. This is Defensin beta 118 (DEFB118) from Homo sapiens (Human).